Consider the following 492-residue polypeptide: Catalase (492 aa).

Residues H65 and N138 contribute to the active site. A heme-binding site is contributed by Y348.

It belongs to the catalase family. Homotetramer. Heme is required as a cofactor. In terms of tissue distribution, in stems, leaves, roots and developing fruits.

The protein localises to the cytoplasm. The protein resides in the cytosol. It localises to the peroxisome matrix. The enzyme catalyses 2 H2O2 = O2 + 2 H2O. Its function is as follows. Catalyzes the degradation of hydrogen peroxide (H(2)O(2)) generated by peroxisomal oxidases to water and oxygen, thereby protecting cells from the toxic effects of hydrogen peroxide. This Capsicum annuum (Capsicum pepper) protein is Catalase (CAT).